The primary structure comprises 197 residues: MTQTENKVVIFLGPPGAGKGTQAERLAQEQSLTKISTGDILRDHVARGTELGQQVKPILDAGHLVPDEILIALIRDKLAGMRPVRVIFDGFPRTGAQAEALDALLEDLGAPVTAVPLLEVPDQVLIDRIVERGNQAQARGEAVRSDDNEETARRRQQVYREQTQPLIDYYAGRGQLYTVNGVGSLDEVYDRILKGMQ.

Residue 16–21 (GAGKGT) participates in ATP binding. The interval 36–65 (STGDILRDHVARGTELGQQVKPILDAGHLV) is NMP. AMP-binding positions include Thr-37, Arg-42, 63-65 (HLV), 90-93 (GFPR), and Gln-97. Positions 131–147 (ERGNQAQARGEAVRSDD) are LID. Arg-132 is an ATP binding site. AMP contacts are provided by Arg-144 and Arg-155. An ATP-binding site is contributed by Gly-183.

The protein belongs to the adenylate kinase family. As to quaternary structure, monomer.

The protein resides in the cytoplasm. It carries out the reaction AMP + ATP = 2 ADP. The protein operates within purine metabolism; AMP biosynthesis via salvage pathway; AMP from ADP: step 1/1. In terms of biological role, catalyzes the reversible transfer of the terminal phosphate group between ATP and AMP. Plays an important role in cellular energy homeostasis and in adenine nucleotide metabolism. This chain is Adenylate kinase, found in Deinococcus deserti (strain DSM 17065 / CIP 109153 / LMG 22923 / VCD115).